The primary structure comprises 397 residues: MALLRGVFVVAAKRTPFGAYGGLLKDFTATDLSEFAAKAALSAGKVSPETVDSVIMGNVLQSSSDAIYLARHVGLRVGIPKETPALTINRLCGSGFQSIVNGCQEICVKEAEVVLCGGTESMSQAPYCVRNVRFGTKLGSDIKLEDSLWVSLTDQHVQLPMAMTAENLAVKHKISREECDKYALQSQQRWKAANDAGYFNDEMAPIEVKTKKGKQTMQVDEHARPQTTLEQLQKLPPVFKKDGTVTAGNASGVADGAGAVIIASEDAVKKHNFTPLARIVGYFVSGCDPSIMGIGPVPAISGALKKAGLSLKDMDLVEVNEAFAPQYLAVERSLDLDISKTNVNGGAIALGHPLGGSGSRITAHLVHELRRRGGKYAVGSACIGGGQGIAVIIQSTA.

A mitochondrion; not cleaved-targeting transit peptide spans 1 to 16; the sequence is MALLRGVFVVAAKRTP. Lys-25 carries the N6-acetyllysine; alternate modification. Position 25 is an N6-succinyllysine; alternate (Lys-25). Lys-45 is subject to N6-succinyllysine. Cys-92 acts as the Acyl-thioester intermediate in catalysis. Position 119 is a phosphothreonine (Thr-119). Ser-121 carries the phosphoserine modification. At Tyr-127 the chain carries Phosphotyrosine. Residue Thr-136 is modified to Phosphothreonine. N6-acetyllysine; alternate is present on Lys-137. N6-succinyllysine; alternate is present on Lys-137. Ser-140 is modified (phosphoserine). Residues Lys-143, Lys-171, Lys-191, and Lys-209 each carry the N6-acetyllysine; alternate modification. Lys-143, Lys-171, Lys-191, and Lys-209 each carry N6-succinyllysine; alternate. Lys-211, Lys-212, and Lys-214 each carry N6-succinyllysine. Positions 224 and 227 each coordinate CoA. Lys-234 is modified (N6-acetyllysine; alternate). Position 234 is an N6-succinyllysine; alternate (Lys-234). The residue at position 240 (Lys-240) is an N6-succinyllysine. Lys-241 is subject to N6-acetyllysine. Ser-251 is a binding site for CoA. 2 positions are modified to N6-acetyllysine: Lys-269 and Lys-270. At Lys-305 the chain carries N6-acetyllysine; alternate. The residue at position 305 (Lys-305) is an N6-succinyllysine; alternate. Position 310 is a phosphoserine (Ser-310). Lys-312 carries the post-translational modification N6-acetyllysine; alternate. At Lys-312 the chain carries N6-succinyllysine; alternate. Ser-333 bears the Phosphoserine mark. N6-acetyllysine occurs at positions 340 and 375. The Proton donor/acceptor role is filled by Cys-382.

Belongs to the thiolase-like superfamily. Thiolase family. In terms of assembly, homotetramer. Interacts with BNIP3.

The protein resides in the mitochondrion. The enzyme catalyses an acyl-CoA + acetyl-CoA = a 3-oxoacyl-CoA + CoA. The catalysed reaction is 2 acetyl-CoA = acetoacetyl-CoA + CoA. It carries out the reaction acetyl-CoA + H2O = acetate + CoA + H(+). It catalyses the reaction propanoyl-CoA + H2O = propanoate + CoA + H(+). The enzyme catalyses butanoyl-CoA + H2O = butanoate + CoA + H(+). The catalysed reaction is hexanoyl-CoA + H2O = hexanoate + CoA + H(+). It carries out the reaction octanoyl-CoA + H2O = octanoate + CoA + H(+). It catalyses the reaction decanoyl-CoA + H2O = decanoate + CoA + H(+). The enzyme catalyses dodecanoyl-CoA + H2O = dodecanoate + CoA + H(+). The catalysed reaction is tetradecanoyl-CoA + H2O = tetradecanoate + CoA + H(+). It carries out the reaction hexadecanoyl-CoA + H2O = hexadecanoate + CoA + H(+). It functions in the pathway lipid metabolism; fatty acid beta-oxidation. Its function is as follows. In the production of energy from fats, this is one of the enzymes that catalyzes the last step of the mitochondrial beta-oxidation pathway, an aerobic process breaking down fatty acids into acetyl-CoA. Using free coenzyme A/CoA, catalyzes the thiolytic cleavage of medium- to long-chain unbranched 3-oxoacyl-CoAs into acetyl-CoA and a fatty acyl-CoA shortened by two carbon atoms. Also catalyzes the condensation of two acetyl-CoA molecules into acetoacetyl-CoA and could be involved in the production of ketone bodies. Also displays hydrolase activity on various fatty acyl-CoAs. Thereby, could be responsible for the production of acetate in a side reaction to beta-oxidation. Abolishes BNIP3-mediated apoptosis and mitochondrial damage. This Homo sapiens (Human) protein is 3-ketoacyl-CoA thiolase, mitochondrial (ACAA2).